We begin with the raw amino-acid sequence, 150 residues long: Snaclec CTL-Eoc125 (150 aa).

Positions 1 to 23 are cleaved as a signal peptide; it reads MGRFISVSFGLLVVFLSLSGIGA. 3 cysteine pairs are disulfide-bonded: C27-C38, C55-C144, and C121-C136. The C-type lectin domain occupies 34–145; sequence YEGHCYKVFS…CSSTQQFICK (112 aa).

The protein belongs to the snaclec family. In terms of assembly, heterodimer; disulfide-linked. Expressed by the venom gland.

The protein localises to the secreted. Its function is as follows. Interferes with one step of hemostasis (modulation of platelet aggregation, or coagulation cascade, for example). This is Snaclec CTL-Eoc125 from Echis ocellatus (Ocellated saw-scaled viper).